Here is a 105-residue protein sequence, read N- to C-terminus: Large ribosomal subunit protein uL24 (105 aa).

Belongs to the universal ribosomal protein uL24 family. As to quaternary structure, part of the 50S ribosomal subunit.

Its function is as follows. One of two assembly initiator proteins, it binds directly to the 5'-end of the 23S rRNA, where it nucleates assembly of the 50S subunit. Functionally, one of the proteins that surrounds the polypeptide exit tunnel on the outside of the subunit. The chain is Large ribosomal subunit protein uL24 from Acinetobacter baumannii (strain AB307-0294).